A 589-amino-acid polypeptide reads, in one-letter code: Threonine--tRNA ligase (589 aa).

The tract at residues Asp191–Pro487 is catalytic. Cys284, His335, and His464 together coordinate Zn(2+).

It belongs to the class-II aminoacyl-tRNA synthetase family. Homodimer. Requires Zn(2+) as cofactor.

The protein resides in the cytoplasm. The enzyme catalyses tRNA(Thr) + L-threonine + ATP = L-threonyl-tRNA(Thr) + AMP + diphosphate + H(+). Catalyzes the attachment of threonine to tRNA(Thr) in a two-step reaction: L-threonine is first activated by ATP to form Thr-AMP and then transferred to the acceptor end of tRNA(Thr). Also edits incorrectly charged L-seryl-tRNA(Thr). The chain is Threonine--tRNA ligase from Mycoplasmopsis pulmonis (strain UAB CTIP) (Mycoplasma pulmonis).